The primary structure comprises 260 residues: Ribosomal RNA small subunit methyltransferase A (260 aa).

Positions 16, 18, 43, 64, 86, and 108 each coordinate S-adenosyl-L-methionine.

It belongs to the class I-like SAM-binding methyltransferase superfamily. rRNA adenine N(6)-methyltransferase family. RsmA subfamily.

It localises to the cytoplasm. It carries out the reaction adenosine(1518)/adenosine(1519) in 16S rRNA + 4 S-adenosyl-L-methionine = N(6)-dimethyladenosine(1518)/N(6)-dimethyladenosine(1519) in 16S rRNA + 4 S-adenosyl-L-homocysteine + 4 H(+). Its function is as follows. Specifically dimethylates two adjacent adenosines (A1518 and A1519) in the loop of a conserved hairpin near the 3'-end of 16S rRNA in the 30S particle. May play a critical role in biogenesis of 30S subunits. In Buchnera aphidicola subsp. Baizongia pistaciae (strain Bp), this protein is Ribosomal RNA small subunit methyltransferase A.